The sequence spans 104 residues: Nucleoid-associated protein jk2011 (104 aa).

It belongs to the YbaB/EbfC family. In terms of assembly, homodimer.

It localises to the cytoplasm. Its subcellular location is the nucleoid. Binds to DNA and alters its conformation. May be involved in regulation of gene expression, nucleoid organization and DNA protection. This is Nucleoid-associated protein jk2011 from Corynebacterium jeikeium (strain K411).